Reading from the N-terminus, the 407-residue chain is Gonadotropin-releasing hormone receptor (407 aa).

The Extracellular portion of the chain corresponds to 1–36; the sequence is MDYLNDSMFNNMTYNITSTPLPDAPRFDNVYVSKLC. 3 N-linked (GlcNAc...) asparagine glycosylation sites follow: Asn5, Asn11, and Asn15. A helical transmembrane segment spans residues 37-57; that stretch reads VLGTVFVISFFGNTLVIIQIF. Over 58–69 the chain is Cytoplasmic; the sequence is RIRGSRSTIQSL. The helical transmembrane segment at 70-90 threads the bilayer; sequence ILNLAIADLMVSFFNILMDII. Over 91-105 the chain is Extracellular; sequence WSATVEWLAGNTMCK. A disulfide bond links Cys104 and Cys183. A helical transmembrane segment spans residues 106–126; sequence IMKYLTVFGLHLSTYITVSIA. Over 127–147 the chain is Cytoplasmic; the sequence is LDRCFAILSPMSRSKAPLRVR. The chain crosses the membrane as a helical span at residues 148 to 168; sequence IMITMAWVLSAIFSIPQAVIF. Topologically, residues 169-199 are extracellular; sequence QEQRKMFRQGMFHQCRDSYNALWQKQLYSAS. The helical transmembrane segment at 200–220 threads the bilayer; it reads SLILLFVIPLIIMVTSYLLIL. Over 221–268 the chain is Cytoplasmic; that stretch reads KTIVKTSRQFHDTPISPTSMSCYSVNHGQIRTHLFERARKRSSRMSAV. A helical transmembrane segment spans residues 269 to 289; that stretch reads IVAAFILCWTPYYIIFLGFAF. Over 290-298 the chain is Extracellular; that stretch reads FQWDNSRTV. Residues 299–319 form a helical membrane-spanning segment; sequence IYFFTLGTSNCMLNPLIYGAF. Topologically, residues 320 to 407 are cytoplasmic; sequence TIYKVHRGRS…NGKMPTKPPG (88 aa). The disordered stretch occupies residues 377–407; it reads SLTNPHQPVRPSPGINSTTSPNGKMPTKPPG.

The protein belongs to the G-protein coupled receptor 1 family. Widely expressed in peripheral nervous tissue, gonadal tissue and brain. In the brain, expression is high in the palliovisceral lobe and superior buccal lobe but low in the subvertical lobe, superior and inferior frontal lobe, posterior brachial lobe and pedal lobe. Expressed in stomach, rectum, aorta, heart, salivary gland, branchia, pancreas, radula retractor muscle, branchial vessel but not in white body, esophagus, liver and kidney.

It is found in the cell membrane. In terms of biological role, receptor for gonadotropin releasing hormone (GnRH) that mediates the action of GnRH to stimulate the secretion of the gonadotropic hormones luteinizing hormone (LH) and follicle-stimulating hormone (FSH). This receptor mediates its action by association with G-proteins that activate a phosphatidylinositol-calcium second messenger system. Ligand interaction triggers steroidogenesis in spermatozoa and follicles. Appears to be involved in contraction of the radula retractor muscle. The polypeptide is Gonadotropin-releasing hormone receptor (Octopus vulgaris (Common octopus)).